Reading from the N-terminus, the 98-residue chain is Cystatin-A (98 aa).

N-acetylmethionine is present on M1. The Secondary area of contact motif lies at 46–50; that stretch reads QVVAG.

It belongs to the cystatin family. As to expression, expressed in the skin throughout the epidermis.

Its subcellular location is the cytoplasm. Its function is as follows. This is an intracellular thiol proteinase inhibitor. Has an important role in desmosome-mediated cell-cell adhesion in the lower levels of the epidermis. In Homo sapiens (Human), this protein is Cystatin-A (CSTA).